A 330-amino-acid polypeptide reads, in one-letter code: 4-hydroxythreonine-4-phosphate dehydrogenase (330 aa).

Residues His-136 and Thr-137 each coordinate substrate. A divalent metal cation contacts are provided by His-166, His-211, and His-266. Substrate-binding residues include Lys-274, Asn-283, and Arg-292.

It belongs to the PdxA family. As to quaternary structure, homodimer. The cofactor is Zn(2+). Requires Mg(2+) as cofactor. It depends on Co(2+) as a cofactor.

It localises to the cytoplasm. It catalyses the reaction 4-(phosphooxy)-L-threonine + NAD(+) = 3-amino-2-oxopropyl phosphate + CO2 + NADH. The protein operates within cofactor biosynthesis; pyridoxine 5'-phosphate biosynthesis; pyridoxine 5'-phosphate from D-erythrose 4-phosphate: step 4/5. Functionally, catalyzes the NAD(P)-dependent oxidation of 4-(phosphooxy)-L-threonine (HTP) into 2-amino-3-oxo-4-(phosphooxy)butyric acid which spontaneously decarboxylates to form 3-amino-2-oxopropyl phosphate (AHAP). The chain is 4-hydroxythreonine-4-phosphate dehydrogenase from Erwinia tasmaniensis (strain DSM 17950 / CFBP 7177 / CIP 109463 / NCPPB 4357 / Et1/99).